The sequence spans 206 residues: Ras-related protein Rab7 (206 aa).

Residues 15–22 (GDTGVGKT), 63–67 (DTAGQ), and 125–128 (NKID) contribute to the GTP site. 2 S-geranylgeranyl cysteine lipidation sites follow: Cys-204 and Cys-206. A Cysteine methyl ester modification is found at Cys-206.

Belongs to the small GTPase superfamily. Rab family.

It is found in the cell membrane. Protein transport. Probably involved in vesicular traffic. The protein is Ras-related protein Rab7 of Vigna aconitifolia (Moth bean).